We begin with the raw amino-acid sequence, 316 residues long: ATP synthase gamma chain (316 aa).

It belongs to the ATPase gamma chain family. In terms of assembly, F-type ATPases have 2 components, CF(1) - the catalytic core - and CF(0) - the membrane proton channel. CF(1) has five subunits: alpha(3), beta(3), gamma(1), delta(1), epsilon(1). CF(0) has three main subunits: a, b and c.

It localises to the cellular thylakoid membrane. Produces ATP from ADP in the presence of a proton gradient across the membrane. The gamma chain is believed to be important in regulating ATPase activity and the flow of protons through the CF(0) complex. In Prochlorococcus marinus (strain NATL2A), this protein is ATP synthase gamma chain.